Consider the following 474-residue polypeptide: tRNA-2-methylthio-N(6)-dimethylallyladenosine synthase (474 aa).

Residues 3–120 form the MTTase N-terminal domain; that stretch reads KKLLIKTWGC…LPQMIKDSQS (118 aa). Cys12, Cys49, Cys83, Cys157, Cys161, and Cys164 together coordinate [4Fe-4S] cluster. The 233-residue stretch at 143–375 folds into the Radical SAM core domain; the sequence is RADGVTAFVS…QQQINTQAMR (233 aa). The TRAM domain maps to 378 to 441; the sequence is RQMLNTEQRI…TNSLRGELVR (64 aa).

Belongs to the methylthiotransferase family. MiaB subfamily. In terms of assembly, monomer. [4Fe-4S] cluster is required as a cofactor.

The protein resides in the cytoplasm. It carries out the reaction N(6)-dimethylallyladenosine(37) in tRNA + (sulfur carrier)-SH + AH2 + 2 S-adenosyl-L-methionine = 2-methylsulfanyl-N(6)-dimethylallyladenosine(37) in tRNA + (sulfur carrier)-H + 5'-deoxyadenosine + L-methionine + A + S-adenosyl-L-homocysteine + 2 H(+). Catalyzes the methylthiolation of N6-(dimethylallyl)adenosine (i(6)A), leading to the formation of 2-methylthio-N6-(dimethylallyl)adenosine (ms(2)i(6)A) at position 37 in tRNAs that read codons beginning with uridine. The polypeptide is tRNA-2-methylthio-N(6)-dimethylallyladenosine synthase (Photobacterium profundum (strain SS9)).